We begin with the raw amino-acid sequence, 219 residues long: Ribosomal RNA large subunit methyltransferase E (219 aa).

Positions 60, 62, 85, 101, and 126 each coordinate S-adenosyl-L-methionine. Residue Lys166 is the Proton acceptor of the active site.

This sequence belongs to the class I-like SAM-binding methyltransferase superfamily. RNA methyltransferase RlmE family.

It localises to the cytoplasm. The enzyme catalyses uridine(2552) in 23S rRNA + S-adenosyl-L-methionine = 2'-O-methyluridine(2552) in 23S rRNA + S-adenosyl-L-homocysteine + H(+). Functionally, specifically methylates the uridine in position 2552 of 23S rRNA at the 2'-O position of the ribose in the fully assembled 50S ribosomal subunit. The sequence is that of Ribosomal RNA large subunit methyltransferase E from Bordetella avium (strain 197N).